The primary structure comprises 397 residues: Enoyl-[acyl-carrier-protein] reductase [NADH] (397 aa).

NAD(+) is bound by residues 48–53 (GASTGY), 74–75 (FE), 111–112 (DA), and 139–140 (VA). Tyr225 contacts substrate. The Proton donor role is filled by Tyr235. Residues Lys244 and 273-275 (VVT) contribute to the NAD(+) site.

It belongs to the TER reductase family. Monomer.

The catalysed reaction is a 2,3-saturated acyl-[ACP] + NAD(+) = a (2E)-enoyl-[ACP] + NADH + H(+). It functions in the pathway lipid metabolism; fatty acid biosynthesis. Involved in the final reduction of the elongation cycle of fatty acid synthesis (FAS II). Catalyzes the reduction of a carbon-carbon double bond in an enoyl moiety that is covalently linked to an acyl carrier protein (ACP). This Burkholderia pseudomallei (strain 1106a) protein is Enoyl-[acyl-carrier-protein] reductase [NADH].